The following is a 150-amino-acid chain: UPF0506 protein SJCHGC02381 (150 aa).

The signal sequence occupies residues 1 to 18 (MNTCIQLLILCLVTVINS). N-linked (GlcNAc...) asparagine glycosylation is found at asparagine 20, asparagine 24, asparagine 32, asparagine 36, asparagine 48, asparagine 52, asparagine 64, and asparagine 110. Residues 22-49 (TDNSTENTIKNETENATETELPETFENE) are disordered. Over residues 36-49 (NATETELPETFENE) the composition is skewed to acidic residues. 3 disulfide bridges follow: cysteine 116–cysteine 130, cysteine 123–cysteine 134, and cysteine 129–cysteine 139.

Belongs to the UPF0506 family.

Its subcellular location is the secreted. The protein is UPF0506 protein SJCHGC02381 of Schistosoma japonicum (Blood fluke).